A 310-amino-acid polypeptide reads, in one-letter code: Beta-ketoacyl-[acyl-carrier-protein] synthase III (310 aa).

Active-site residues include Cys116 and His239. Residues 240–244 (QANYR) are ACP-binding. Asn269 is a catalytic residue.

This sequence belongs to the thiolase-like superfamily. FabH family. As to quaternary structure, homodimer.

The protein localises to the cytoplasm. The enzyme catalyses malonyl-[ACP] + acetyl-CoA + H(+) = 3-oxobutanoyl-[ACP] + CO2 + CoA. It functions in the pathway lipid metabolism; fatty acid biosynthesis. Functionally, catalyzes the condensation reaction of fatty acid synthesis by the addition to an acyl acceptor of two carbons from malonyl-ACP. Catalyzes the first condensation reaction which initiates fatty acid synthesis and may therefore play a role in governing the total rate of fatty acid production. Possesses both acetoacetyl-ACP synthase and acetyl transacylase activities. Its substrate specificity determines the biosynthesis of branched-chain and/or straight-chain of fatty acids. The sequence is that of Beta-ketoacyl-[acyl-carrier-protein] synthase III from Acholeplasma laidlawii (strain PG-8A).